A 3412-amino-acid polypeptide reads, in one-letter code: Genome polyprotein (3412 aa).

The Cytoplasmic segment spans residues 1–104 (MSGRKAQGKT…LSSRKRRSSE (104 aa)). The hydrophobic; homodimerization of capsid protein C stretch occupies residues 38–72 (PGPSRGVQGFIFFFLFNILTGKKLTTHLKRLWRML). The propeptide at 102–121 (SSEMTMMPLLILSMVILGGG) is ER anchor for the capsid protein C, removed in mature form by serine protease NS3. A helical transmembrane segment spans residues 105–125 (MTMMPLLILSMVILGGGVTLV). The Extracellular segment spans residues 126-244 (RKNRWLLLNV…GERQLQKIER (119 aa)). Residues Asn134 and Asn150 are each glycosylated (N-linked (GlcNAc...) asparagine; by host). Residues 245 to 265 (WLVRNPFFAVTALAIAYLVGN) form a helical membrane-spanning segment. Residues 266–270 (NKTQR) are Cytoplasmic-facing. A helical membrane pass occupies residues 271 to 285 (VVIALLVLAVGPAYS). The Extracellular portion of the chain corresponds to 286–730 (AHCIGITDRD…TVFGSAFQGL (445 aa)). 8 cysteine pairs are disulfide-bonded: Cys288-Cys315, Cys345-Cys401, Cys345-Cys406, Cys359-Cys390, Cys377-Cys401, Cys377-Cys406, Cys467-Cys568, and Cys585-Cys615. The interval 383 to 396 (DRGWGNGCGLFGKG) is fusion peptide. Residues 731-751 (FGGLSWITKVIMGAVLIWVGI) traverse the membrane as a helical segment. The Extracellular segment spans residues 752-757 (NTRNMT). A helical membrane pass occupies residues 758 to 778 (MSMSMILVGVIMMFLSLGVGA). The Extracellular portion of the chain corresponds to 779-1132 (DQGCAVNFGK…LVRSWVTAGE (354 aa)). Cystine bridges form between Cys782–Cys793, Cys833–Cys921, Cys957–Cys1002, Cys1058–Cys1107, Cys1069–Cys1091, and Cys1090–Cys1094. N-linked (GlcNAc...) asparagine; by host glycosylation is found at Asn908 and Asn986. Residues 1133-1153 (VHAVPFGLVSMMIAMEVVLRK) form a helical membrane-spanning segment. Topologically, residues 1154 to 1201 (RQGPKQMLVGGIILLGAMLVGQVTMLDLVKLIVAVGLHFHEINNGGDA) are cytoplasmic. Residues 1202–1222 (MYMALIASFSIRPGLLIGFGL) form a helical membrane-spanning segment. Residues 1223–1287 (RTLWSPRERL…ILPLMALLTP (65 aa)) lie on the Lumenal side of the membrane. Residues 1288–1308 (VTMYEVRMATMLFCTVVIVGV) traverse the membrane as a helical segment. Topologically, residues 1309-1355 (LHQNSKDTSMQKTIPIVALTLTSYMGLTQPFLGLCAYMSTQVFGRRS) are cytoplasmic. Residues 1356 to 1376 (IPVNEALAAAGLVGVLAGLAF) traverse the membrane as a helical segment. Residues 1377–1378 (QD) are Lumenal-facing. Residues 1379 to 1399 (MENFLGPIAVGGILMMLVSVA) form a helical membrane-spanning segment. At 1400-1456 (GKVDGLELKKLGEVSWEEEAEISGSSSRYDVALSEQGEFKLLSEDKVPWDQIVMTSL) the chain is on the cytoplasmic side. Positions 1407–1446 (LKKLGEVSWEEEAEISGSSSRYDVALSEQGEFKLLSEDKV) are interacts with and activates NS3 protease. The segment at residues 1457–1477 (ALVGAAIHPFALLLVLGGWVL) is an intramembrane region (helical). The Cytoplasmic portion of the chain corresponds to 1478-2157 (HIKGARRSGD…RNALSMMPEA (680 aa)). The region spanning 1485-1665 (SGDVLWDIPT…EVKEESKEEL (181 aa)) is the Peptidase S7 domain. Catalysis depends on charge relay system; for serine protease NS3 activity residues His1537, Asp1561, and Ser1622. The region spanning 1669–1825 (PTMLKKGMTT…HSNGEIEDVQ (157 aa)) is the Helicase ATP-binding domain. The interval 1673–1676 (KKGM) is important for RNA-binding. 1682–1689 (FHPGAGKT) serves as a coordination point for ATP. The DEAH box signature appears at 1773–1776 (DEAH). A Helicase C-terminal domain is found at 1820–1997 (EIEDVQTDIP…VRGGMVAPLY (178 aa)). The residue at position 1877 (Lys1877) is an N6-acetyllysine; by host. Residues 1942 to 1961 (AAQRRGRIGRNPNRDGDSYY) are disordered. A helical membrane pass occupies residues 2158–2178 (MTIVMLFILAGLLTSGMVIFF). Over 2179–2186 (MSPKGMSR) the chain is Lumenal. Residues 2187–2207 (MSMAMGTMAGSGYLMFLGGVK) constitute an intramembrane region (helical). At 2208 to 2209 (PT) the chain is on the lumenal side. The chain crosses the membrane as a helical span at residues 2210-2230 (HISYVMLIFFVLMVVIIPEPG). Residues 2231 to 2241 (QQRSIQDNQVA) are Cytoplasmic-facing. The chain crosses the membrane as a helical span at residues 2242 to 2262 (YLIIGILTLLSVVAANELGML). Topologically, residues 2263-2293 (EKTKEDFFGKRNIATSGGTIPWSWPDLDLKP) are lumenal. The helical intramembrane region spans 2294-2314 (GAAWTVYVGIVTMLSPMLHHW). Residues 2315 to 2360 (IKVEYGNLSLSGIAQSASVLSFMDKGVPFMKMNISVVILLVSGWNS) are Lumenal-facing. The helical transmembrane segment at 2361 to 2380 (ITVIPLLCGVGGAMLHWTLI) threads the bilayer. At 2381–2421 (LPGIKAQQSKLAQKRVFHGVAKNPVVDGNPTADIEEAPEMP) the chain is on the cytoplasmic side. Residues 2422–2442 (ALYEKKLALYLLLALSLMSVA) form a helical membrane-spanning segment. Residues 2443–2445 (MCR) lie on the Lumenal side of the membrane. Residues 2446-2466 (TPFSLAEGIVLSSAALGPLIE) traverse the membrane as a helical segment. Over 2467–3411 (GNTSLLWNGP…VDADLQPGEL (945 aa)) the chain is Cytoplasmic. The mRNA cap 0-1 NS5-type MT domain occupies 2508–2772 (GSANGKTLGE…DVILPIGTRS (265 aa)). Residue Ser2563 participates in S-adenosyl-L-methionine binding. Ser2563 bears the Phosphoserine mark. The For 2'-O-MTase activity role is filled by Lys2568. Residues Gly2593, Trp2594, Thr2611, Leu2612, Asp2638, and Ile2639 each coordinate S-adenosyl-L-methionine. The active-site For 2'-O-MTase activity is the Asp2653. Ile2654 serves as a coordination point for S-adenosyl-L-methionine. Active-site for 2'-O-MTase activity residues include Lys2689 and Glu2725. Tyr2727 provides a ligand contact to S-adenosyl-L-methionine. Positions 2879–2912 (RKIMRVVNRWLFRHLAREKKPRLCTKEEFIAKVR) match the Nuclear localization signal motif. Glu2946, His2950, Cys2955, and Cys2958 together coordinate Zn(2+). Positions 3036-3188 (GGFYADDTAG…KPVDDRFGLA (153 aa)) constitute a RdRp catalytic domain. 3 residues coordinate Zn(2+): His3223, Cys3239, and Cys3358.

It in the N-terminal section; belongs to the class I-like SAM-binding methyltransferase superfamily. mRNA cap 0-1 NS5-type methyltransferase family. Homodimer. Interacts (via N-terminus) with host EXOC1 (via C-terminus); this interaction results in EXOC1 degradation through the proteasome degradation pathway. As to quaternary structure, forms heterodimers with envelope protein E in the endoplasmic reticulum and Golgi. In terms of assembly, homodimer; in the endoplasmic reticulum and Golgi. Interacts with protein prM. Interacts with non-structural protein 1. Homodimer; Homohexamer when secreted. Interacts with envelope protein E. As to quaternary structure, interacts (via N-terminus) with serine protease NS3. In terms of assembly, forms a heterodimer with serine protease NS3. May form homooligomers. Forms a heterodimer with NS2B. Interacts with non-structural protein 2A (via N-terminus). Interacts with NS4B. Interacts with unphosphorylated RNA-directed RNA polymerase NS5; this interaction stimulates RNA-directed RNA polymerase NS5 guanylyltransferase activity. NS3 interacts with host PDCD6IP; this interaction contributes to virion release. As to quaternary structure, interacts with serine protease NS3. In terms of assembly, homodimer. Interacts with host STAT2; this interaction prevents the establishment of cellular antiviral state. Interacts with serine protease NS3. Interacts with host TRIM23; this interaction leads to NS5 ubiquitination. Post-translationally, specific enzymatic cleavages in vivo yield mature proteins. The nascent capsid protein C contains a C-terminal hydrophobic domain that act as a signal sequence for translocation of prM into the lumen of the ER. Mature capsid protein C is cleaved at a site upstream of this hydrophobic domain by NS3. prM is cleaved in post-Golgi vesicles by a host furin, releasing the mature small envelope protein M, and peptide pr. Non-structural protein 2A-alpha, a C-terminally truncated form of non-structural protein 2A, results from partial cleavage by NS3. Specific enzymatic cleavages in vivo yield mature proteins peptide 2K acts as a signal sequence and is removed from the N-terminus of NS4B by the host signal peptidase in the ER lumen. Signal cleavage at the 2K-4B site requires a prior NS3 protease-mediated cleavage at the 4A-2K site. Cleaved in post-Golgi vesicles by a host furin, releasing the mature small envelope protein M, and peptide pr. This cleavage is incomplete as up to 30% of viral particles still carry uncleaved prM. In terms of processing, N-glycosylated. Post-translationally, N-glycosylated. The excreted form is glycosylated and this is required for efficient secretion of the protein from infected cells. Polyubiquitinated; ubiquitination is probably mediated by host TRIM23 and is prerequisite for NS5-STAT2 interaction. NS5 is not ISGylated or sumoylated. In terms of processing, acetylated by host KAT5. Acetylation modulates NS3 RNA-binding and unwinding activities and plays an important positive role for viral replication. Post-translationally, phosphorylated on serines residues. This phosphorylation may trigger NS5 nuclear localization.

Its subcellular location is the virion. The protein localises to the host nucleus. The protein resides in the host cytoplasm. It is found in the host perinuclear region. It localises to the secreted. Its subcellular location is the virion membrane. The protein localises to the host endoplasmic reticulum membrane. The enzyme catalyses Selective hydrolysis of -Xaa-Xaa-|-Yaa- bonds in which each of the Xaa can be either Arg or Lys and Yaa can be either Ser or Ala.. The catalysed reaction is RNA(n) + a ribonucleoside 5'-triphosphate = RNA(n+1) + diphosphate. It catalyses the reaction a ribonucleoside 5'-triphosphate + H2O = a ribonucleoside 5'-diphosphate + phosphate + H(+). It carries out the reaction ATP + H2O = ADP + phosphate + H(+). The enzyme catalyses a 5'-end (5'-triphosphoguanosine)-ribonucleoside in mRNA + S-adenosyl-L-methionine = a 5'-end (N(7)-methyl 5'-triphosphoguanosine)-ribonucleoside in mRNA + S-adenosyl-L-homocysteine. The catalysed reaction is a 5'-end (N(7)-methyl 5'-triphosphoguanosine)-ribonucleoside in mRNA + S-adenosyl-L-methionine = a 5'-end (N(7)-methyl 5'-triphosphoguanosine)-(2'-O-methyl-ribonucleoside) in mRNA + S-adenosyl-L-homocysteine + H(+). Its function is as follows. Plays a role in virus budding by binding to the cell membrane and gathering the viral RNA into a nucleocapsid that forms the core of a mature virus particle. During virus entry, may induce genome penetration into the host cytoplasm after hemifusion induced by the surface proteins. Can migrate to the cell nucleus where it modulates host functions. Functionally, inhibits RNA silencing by interfering with host Dicer. Prevents premature fusion activity of envelope proteins in trans-Golgi by binding to envelope protein E at pH6.0. After virion release in extracellular space, gets dissociated from E dimers. In terms of biological role, acts as a chaperone for envelope protein E during intracellular virion assembly by masking and inactivating envelope protein E fusion peptide. prM is the only viral peptide matured by host furin in the trans-Golgi network probably to avoid catastrophic activation of the viral fusion activity in acidic Golgi compartment prior to virion release. prM-E cleavage is inefficient, and many virions are only partially matured. These uncleaved prM would play a role in immune evasion. Its function is as follows. May play a role in virus budding. Exerts cytotoxic effects by activating a mitochondrial apoptotic pathway through M ectodomain. May display a viroporin activity. Functionally, binds to host cell surface receptor and mediates fusion between viral and cellular membranes. Envelope protein is synthesized in the endoplasmic reticulum in the form of heterodimer with protein prM. They play a role in virion budding in the ER, and the newly formed immature particle is covered with 60 spikes composed of heterodimer between precursor prM and envelope protein E. The virion is transported to the Golgi apparatus where the low pH causes dissociation of PrM-E heterodimers and formation of E homodimers. prM-E cleavage is inefficient, and many virions are only partially matured. These uncleaved prM would play a role in immune evasion. Involved in immune evasion, pathogenesis and viral replication. Once cleaved off the polyprotein, is targeted to three destinations: the viral replication cycle, the plasma membrane and the extracellular compartment. Essential for viral replication. Required for formation of the replication complex and recruitment of other non-structural proteins to the ER-derived membrane structures. Excreted as a hexameric lipoparticle that plays a role against host immune response. Antagonizing the complement function. Binds to the host macrophages and dendritic cells. Inhibits signal transduction originating from Toll-like receptor 3 (TLR3). In terms of biological role, component of the viral RNA replication complex that functions in virion assembly and antagonizes the host immune response. Its function is as follows. Required cofactor for the serine protease function of NS3. May have membrane-destabilizing activity and form viroporins. Functionally, displays three enzymatic activities: serine protease, NTPase and RNA helicase. NS3 serine protease, in association with NS2B, performs its autocleavage and cleaves the polyprotein at dibasic sites in the cytoplasm: C-prM, NS2A-NS2B, NS2B-NS3, NS3-NS4A, NS4A-2K and NS4B-NS5. NS3 RNA helicase binds RNA and unwinds dsRNA in the 3' to 5' direction. Also plays a role in virus assembly. Regulates the ATPase activity of the NS3 helicase activity. NS4A allows NS3 helicase to conserve energy during unwinding. In terms of biological role, functions as a signal peptide for NS4B and is required for the interferon antagonism activity of the latter. Its function is as follows. Induces the formation of ER-derived membrane vesicles where the viral replication takes place. Inhibits interferon (IFN)-induced host STAT1 phosphorylation and nuclear translocation, thereby preventing the establishment of cellular antiviral state by blocking the IFN-alpha/beta pathway. Functionally, replicates the viral (+) and (-) RNA genome, and performs the capping of genomes in the cytoplasm. NS5 methylates viral RNA cap at guanine N-7 and ribose 2'-O positions. Besides its role in RNA genome replication, also prevents the establishment of cellular antiviral state by blocking the interferon-alpha/beta (IFN-alpha/beta) signaling pathway. IFN-I induces binding of NS5 to host IFN-activated transcription factor STAT2, preventing its transcriptional activity. Host TRIM23 is the E3 ligase that interacts with and polyubiquitinates NS5 to promote its binding to STAT2 and trigger IFN-I signaling inhibition. The polypeptide is Genome polyprotein (Yellow fever virus (isolate Uganda/A7094A4/1948) (YFV)).